Reading from the N-terminus, the 347-residue chain is uncharacterized protein (347 aa).

Disordered stretches follow at residues 1 to 40, 72 to 92, 133 to 158, 173 to 209, and 306 to 347; these read MAQE…SNSM, SCED…IQGS, SDST…QLTL, ENQK…QVSH, and EDPR…PPDF. Positions 15–25 are enriched in polar residues; the sequence is PGQNITETTTD. Over residues 143-154 the composition is skewed to basic and acidic residues; sequence GDNKDKHPKEKT. Over residues 179-194 the composition is skewed to acidic residues; sequence KDDDSVFPESAQEEDS. Polar residues predominate over residues 195–209; it reads QLPSSSLPGMAQVSH. A compositionally biased stretch (basic and acidic residues) spans 306-318; sequence EDPREANERPREL. Positions 319–330 are enriched in basic residues; the sequence is ARKKRFSYRSKR.

This is an uncharacterized protein from Bos taurus (Bovine).